A 482-amino-acid polypeptide reads, in one-letter code: Pre-glycoprotein polyprotein GP complex (482 aa).

Gly-2 carries the N-myristoyl glycine; by host lipid modification. At 2–17 (GQFISFMQEIPIFLQE) the chain is on the extracellular side. The helical transmembrane segment at 18-32 (ALNIALVAVSLICIV) threads the bilayer. Residue Lys-33 is a topological domain, cytoplasmic. The helical transmembrane segment at 34–53 (GLVNLYRCGLFQLMVFLVLA) threads the bilayer. Extracellular-facing segments span residues 54–58 (GRSCS) and 59–421 (EETF…TLVD). Residue Cys-57 coordinates Zn(2+). Residues Asn-83 and Asn-95 are each glycosylated (N-linked (GlcNAc...) asparagine; by host). Disulfide bonds link Cys-92–Cys-224, Cys-134–Cys-162, Cys-205–Cys-211, Cys-269–Cys-282, and Cys-353–Cys-374. 2 N-linked (GlcNAc...) asparagine; by host glycosylation sites follow: Asn-164 and Asn-176. N-linked (GlcNAc...) asparagine; by host glycans are attached at residues Asn-354, Asn-362, Asn-379, and Asn-384. The helical transmembrane segment at 422 to 442 (ICFWSTEFFISTLFLHLIGFP) threads the bilayer. The Cytoplasmic portion of the chain corresponds to 443–482 (THEHIRGEGCPLPHRLNSMGGCRCGKYLPLKKPTIWHRRH). 7 residues coordinate Zn(2+): His-444, His-446, Cys-452, His-456, Cys-464, Cys-466, and His-482.

This sequence belongs to the arenaviridae GPC protein family. In terms of assembly, homotetramer; disulfide-linked. Homotetramer. GP2 homotetramers bind through ionic interactions with GP1 homotetramers to form the GP complex together with the stable signal peptide. The GP-C polyprotein interacts with the host protease MBTPS1/SKI-1 resulting in the polyprotein processing. In terms of processing, specific enzymatic cleavages in vivo yield mature proteins. GP-C polyprotein is cleaved in the endoplasmic reticulum by the host protease MBTPS1. Only cleaved glycoprotein is incorporated into virions. Post-translationally, the SSP remains stably associated with the GP complex following cleavage by signal peptidase and plays crucial roles in the trafficking of GP through the secretory pathway. Myristoylation is necessary for GP2-mediated fusion activity.

It localises to the virion membrane. The protein localises to the host endoplasmic reticulum membrane. It is found in the host Golgi apparatus membrane. Its subcellular location is the host cell membrane. Functionally, class I viral fusion protein that directs fusion of viral and host endosomal membranes, leading to delivery of the nucleocapsid into the cytoplasm. Membrane fusion is mediated by irreversible conformational changes induced upon acidification in the endosome. Stable signal peptide (SSP): cleaved and functions as a signal peptide. In addition, it is also retained as the third component of the GP complex. The SSP is required for efficient glycoprotein expression, post-translational maturation cleavage of GP1 and GP2, glycoprotein transport to the cell surface plasma membrane, formation of infectious virus particles, and acid pH-dependent glycoprotein-mediated cell fusion. Its function is as follows. Interacts with the host receptor. In Artibeus (neotropical fruit bats), this protein is Pre-glycoprotein polyprotein GP complex.